A 123-amino-acid polypeptide reads, in one-letter code: Small ribosomal subunit protein uS12 (123 aa).

Aspartate 89 bears the 3-methylthioaspartic acid mark. Residues 104–123 (TQGVKDRRQRRSKYGAKRPK) are disordered. The segment covering 110 to 123 (RRQRRSKYGAKRPK) has biased composition (basic residues).

It belongs to the universal ribosomal protein uS12 family. Part of the 30S ribosomal subunit. Contacts proteins S8 and S17. May interact with IF1 in the 30S initiation complex.

Functionally, with S4 and S5 plays an important role in translational accuracy. Its function is as follows. Interacts with and stabilizes bases of the 16S rRNA that are involved in tRNA selection in the A site and with the mRNA backbone. Located at the interface of the 30S and 50S subunits, it traverses the body of the 30S subunit contacting proteins on the other side and probably holding the rRNA structure together. The combined cluster of proteins S8, S12 and S17 appears to hold together the shoulder and platform of the 30S subunit. In Rhodospirillum rubrum (strain ATCC 11170 / ATH 1.1.1 / DSM 467 / LMG 4362 / NCIMB 8255 / S1), this protein is Small ribosomal subunit protein uS12.